Reading from the N-terminus, the 145-residue chain is Large ribosomal subunit protein uL13 (145 aa).

Belongs to the universal ribosomal protein uL13 family. Part of the 50S ribosomal subunit.

Functionally, this protein is one of the early assembly proteins of the 50S ribosomal subunit, although it is not seen to bind rRNA by itself. It is important during the early stages of 50S assembly. The sequence is that of Large ribosomal subunit protein uL13 from Staphylococcus carnosus (strain TM300).